The sequence spans 150 residues: Monooxygenase dmxR10 (150 aa).

It belongs to the avfA family.

It functions in the pathway secondary metabolite biosynthesis. Its function is as follows. Monooxygenase; part of the gene cluster that mediates the biosynthesis of the dimeric xanthones cryptosporioptides. The pathway begins with the synthesis of atrochrysone thioester by the polyketide synthase dmx-nrPKS. The atrochrysone carboxyl ACP thioesterase dmxR1 then breaks the thioester bond and releases the atrochrysone carboxylic acid from dmx-nrPKS. Atrochrysone carboxylic acid is decarboxylated by the decarboxylase dmxR15, and oxidized by the anthrone oxygenase dmxR16 to yield emodin. Emodin is then reduced to emodin hydroquinone by the oxidoreductase dmxR7. A-ring reduction by the short chain dehydrogenase dmxR18, dehydration by the scytalone dehydratase-like protein dmxR17 and probable spontaneous re-oxidation, results in overall deoxygenation to chrysophanol. Baeyer-Villiger oxidation by the Baeyer-Villiger monooxygenase (BVMO) dmxR6 then yields monodictylactone in equilibrium with monodictyphenone. In the case of the cryptosporioptides biosynthesis, monodictylactone is reduced at C-12 to an alcohol (by the short chain dehydrogenases dmxR12 or dmxR8) and hydroxylated at C-5 by dmxR9, yielding the electron-rich aromatic which could eliminate H(2)O to form the ortho-quinonemethide, followed by tautomerisation to paraquinone and complete the formal reduction to produce the 10-methylgroup. Conjugate addition of C-4a-OH to the resulting paraquinone by the monooxygenase dmxR10 then gives cyclohexadienone, which is then reduced at C-5 by the short chain dehydrogenase dmxR3 to give the dihydroxanthone. The 6,7-epoxide in the cryptosporioptides could be introduced by the cytochrome P450 monooxygenase dmxL3. The highly reducing PKS dmxL2 manufactures butyrate, which is further carboxylated by dmxL1 to form ethylmalonate. It is not yet clear whether the carboxylation occurs while the butyrate is attached to the ACP of dmxL2, but this unusual fungal metabolite could then be esterified to O-5 by the O-acetyltransferase dmxR13. Finally, dimerization performed by dmxR5 gives the observed dimers cryptosporioptides A, B and C as the final products of the pathway. This Cryptosporiopsis sp. (strain 8999) protein is Monooxygenase dmxR10.